A 196-amino-acid polypeptide reads, in one-letter code: Ribosome maturation factor RimP (196 aa).

The protein belongs to the RimP family.

It is found in the cytoplasm. Required for maturation of 30S ribosomal subunits. The sequence is that of Ribosome maturation factor RimP from Lawsonia intracellularis (strain PHE/MN1-00).